Consider the following 256-residue polypeptide: MGKNLRDLLLAFKNGDISLDEIEKQIKLNYYEEIEERLKLDINRQFRTGVPEVVYGKGKDIDEIIKATLKLVEKNGIALATKIEDIEKLSDEIRKWNLKNYDIKINKKAKTLIIKNKNYEVKKIGKVGILTAGTSDIPVAEEAKDTLEIMGVEAITAYDVGIAGIHRLFPALKRMIEEDVCCIIVVAGMEGALPSVIASMVDIPVIGVPTSTSYGIKITPLLTMLHSCSPGIAVVNIDNGFGAGVFAGLIAKIMHK.

A run of 2 helical transmembrane segments spans residues 181–201 (CCII…ASMV) and 231–251 (GIAV…GLIA).

It is found in the cell membrane. This is an uncharacterized protein from Methanocaldococcus jannaschii (strain ATCC 43067 / DSM 2661 / JAL-1 / JCM 10045 / NBRC 100440) (Methanococcus jannaschii).